The following is a 320-amino-acid chain: MVMIHERKSLKIFAGNSNDKLAKDIADIVGVPLGSAEVGRFSDGEITVNINETVRGIDAFIIQSTSAPVNDNLMELLIMIDAFKRASAGRITAVIPYYGYARQDRKTKARDPITAKLVADILTAAGADRVLTMDLHASQIQGYFDIPLDHLLGVPILGKYFAENGFDQREDVVVVSPDLGSVTRARKFADRIHAPIAIIDKRRPKPNVSEVMHIIGDIKDKTCILIDDMIDTAGTITNGANALVERGAKDVYACCTHAVLSGPAMERIDNSVIKELITLNTIDISKIKPSDKIKVLSVAPVFAEAIRRIYEEISVSKLFD.

ATP-binding positions include 43-45 and 102-103; these read DGE and RQ. Residues histidine 136 and aspartate 178 each coordinate Mg(2+). The active site involves lysine 201. Residues arginine 203, aspartate 227, and 231-235 each bind D-ribose 5-phosphate; that span reads DTAGT.

This sequence belongs to the ribose-phosphate pyrophosphokinase family. Class I subfamily. Homohexamer. Requires Mg(2+) as cofactor.

It localises to the cytoplasm. It carries out the reaction D-ribose 5-phosphate + ATP = 5-phospho-alpha-D-ribose 1-diphosphate + AMP + H(+). The protein operates within metabolic intermediate biosynthesis; 5-phospho-alpha-D-ribose 1-diphosphate biosynthesis; 5-phospho-alpha-D-ribose 1-diphosphate from D-ribose 5-phosphate (route I): step 1/1. Involved in the biosynthesis of the central metabolite phospho-alpha-D-ribosyl-1-pyrophosphate (PRPP) via the transfer of pyrophosphoryl group from ATP to 1-hydroxyl of ribose-5-phosphate (Rib-5-P). In Clostridium tetani (strain Massachusetts / E88), this protein is Ribose-phosphate pyrophosphokinase.